The primary structure comprises 327 residues: tRNA uridine(34) hydroxylase (327 aa).

The 99-residue stretch at 142 to 240 folds into the Rhodanese domain; that stretch reads DDPDTLVIDT…YLEQVPEAES (99 aa). C200 functions as the Cysteine persulfide intermediate in the catalytic mechanism.

This sequence belongs to the TrhO family.

It catalyses the reaction uridine(34) in tRNA + AH2 + O2 = 5-hydroxyuridine(34) in tRNA + A + H2O. Its function is as follows. Catalyzes oxygen-dependent 5-hydroxyuridine (ho5U) modification at position 34 in tRNAs. This chain is tRNA uridine(34) hydroxylase, found in Synechococcus sp. (strain CC9605).